We begin with the raw amino-acid sequence, 262 residues long: Zinc finger protein 138 (262 aa).

The C2H2-type 1 zinc-finger motif lies at 110 to 132 (FRCKECDKSLCMLSRLTQHKKIH). A C2H2-type 2; degenerate zinc finger spans residues 138–160 (YKCEECGKTFNWSTNLSKPKKIH). A C2H2-type 3; degenerate zinc finger spans residues 166-188 (YKCEVCGKAFHQSSILTKHKIIR). A C2H2-type 4 zinc finger spans residues 194-216 (YKCAHCGKAFKQSSHLTRHKIIH). Residues 222 to 244 (YKCEQCGKVFKQSPTLTKHQIIY) form a C2H2-type 5; degenerate zinc finger. The C2H2-type 6; degenerate zinc-finger motif lies at 250–262 (YKCEECGKAFNLS).

It belongs to the krueppel C2H2-type zinc-finger protein family.

The protein localises to the nucleus. Functionally, may be involved in transcriptional regulation as a repressor. The protein is Zinc finger protein 138 (ZNF138) of Homo sapiens (Human).